The primary structure comprises 277 residues: Shikimate dehydrogenase (NADP(+)) (277 aa).

Shikimate is bound by residues 15–17 (SLS) and Thr-62. The active-site Proton acceptor is Lys-66. Asn-87 and Asp-102 together coordinate shikimate. Residues 127–131 (GAGGA), 151–156 (NRTVDK), and Ile-219 contribute to the NADP(+) site. Residue Tyr-221 participates in shikimate binding. Gly-242 lines the NADP(+) pocket.

It belongs to the shikimate dehydrogenase family. As to quaternary structure, homodimer.

It catalyses the reaction shikimate + NADP(+) = 3-dehydroshikimate + NADPH + H(+). It participates in metabolic intermediate biosynthesis; chorismate biosynthesis; chorismate from D-erythrose 4-phosphate and phosphoenolpyruvate: step 4/7. Involved in the biosynthesis of the chorismate, which leads to the biosynthesis of aromatic amino acids. Catalyzes the reversible NADPH linked reduction of 3-dehydroshikimate (DHSA) to yield shikimate (SA). The sequence is that of Shikimate dehydrogenase (NADP(+)) from Bacillus cereus (strain AH187).